We begin with the raw amino-acid sequence, 132 residues long: CLAVATA3/ESR (CLE)-related protein 2-B (132 aa).

The signal sequence occupies residues 1-26 (MASRMGMVAILSLFVCALVASTSVNA). The tract at residues 68–132 (NRASKQLDRE…IGPPPFLDRY (65 aa)) is disordered. 2 positions are modified to hydroxyproline: proline 82 and proline 85. The O-linked (Ara...) hydroxyproline glycan is linked to proline 85.

It belongs to the CLV3/ESR signal peptide family. In terms of processing, the O-glycosylation (arabinosylation) of the hydroxyproline Pro-85 enhances binding affinity of the ESR2Bp peptide for its receptor. As to expression, seed endosperm.

Its subcellular location is the secreted. The protein resides in the extracellular space. Functionally, extracellular signal peptide that regulates cell fate. The polypeptide is CLAVATA3/ESR (CLE)-related protein 2-B (Zea mays (Maize)).